Reading from the N-terminus, the 95-residue chain is Aspartyl/glutamyl-tRNA(Asn/Gln) amidotransferase subunit C (95 aa).

Belongs to the GatC family. As to quaternary structure, heterotrimer of A, B and C subunits.

The enzyme catalyses L-glutamyl-tRNA(Gln) + L-glutamine + ATP + H2O = L-glutaminyl-tRNA(Gln) + L-glutamate + ADP + phosphate + H(+). It catalyses the reaction L-aspartyl-tRNA(Asn) + L-glutamine + ATP + H2O = L-asparaginyl-tRNA(Asn) + L-glutamate + ADP + phosphate + 2 H(+). In terms of biological role, allows the formation of correctly charged Asn-tRNA(Asn) or Gln-tRNA(Gln) through the transamidation of misacylated Asp-tRNA(Asn) or Glu-tRNA(Gln) in organisms which lack either or both of asparaginyl-tRNA or glutaminyl-tRNA synthetases. The reaction takes place in the presence of glutamine and ATP through an activated phospho-Asp-tRNA(Asn) or phospho-Glu-tRNA(Gln). This is Aspartyl/glutamyl-tRNA(Asn/Gln) amidotransferase subunit C from Phenylobacterium zucineum (strain HLK1).